We begin with the raw amino-acid sequence, 260 residues long: Thiazole synthase (260 aa).

Lys-102 (schiff-base intermediate with DXP) is an active-site residue. Residues Gly-163, 189–190 (AG), and 211–212 (NT) each bind 1-deoxy-D-xylulose 5-phosphate.

This sequence belongs to the ThiG family. Homotetramer. Forms heterodimers with either ThiH or ThiS.

The protein localises to the cytoplasm. The catalysed reaction is [ThiS sulfur-carrier protein]-C-terminal-Gly-aminoethanethioate + 2-iminoacetate + 1-deoxy-D-xylulose 5-phosphate = [ThiS sulfur-carrier protein]-C-terminal Gly-Gly + 2-[(2R,5Z)-2-carboxy-4-methylthiazol-5(2H)-ylidene]ethyl phosphate + 2 H2O + H(+). Its pathway is cofactor biosynthesis; thiamine diphosphate biosynthesis. In terms of biological role, catalyzes the rearrangement of 1-deoxy-D-xylulose 5-phosphate (DXP) to produce the thiazole phosphate moiety of thiamine. Sulfur is provided by the thiocarboxylate moiety of the carrier protein ThiS. In vitro, sulfur can be provided by H(2)S. This Geobacter sp. (strain M21) protein is Thiazole synthase.